Here is a 325-residue protein sequence, read N- to C-terminus: Phospholipid phosphatase-related protein type 1 (325 aa).

N5 is a glycosylation site (N-linked (GlcNAc...) asparagine). The next 3 membrane-spanning stretches (helical) occupy residues 13 to 33, 67 to 87, and 127 to 147; these read IIPC…LLAY, FISP…IIFI, and FIGV…AGQV. An N-linked (GlcNAc...) asparagine glycan is attached at N163. 3 helical membrane-spanning segments follow: residues 201–219, 226–244, and 257–277; these read AALS…TSTI, LAKP…LTGL, and VIAG…CVVH. Residue S307 is modified to Phosphoserine. N316 carries an N-linked (GlcNAc...) asparagine glycan.

It belongs to the PA-phosphatase related phosphoesterase family. Highly expressed in the brain. Also found in the liver, kidney and testis. In the brain shows a strongest expression in the hippocampus and cerebellum.

Its subcellular location is the cell membrane. It is found in the cell projection. The protein localises to the neuron projection. May play a role in neurite outgrowth and neurogenesis. This Rattus norvegicus (Rat) protein is Phospholipid phosphatase-related protein type 1.